Consider the following 53-residue polypeptide: UPF0391 membrane protein PputGB1_0151 (53 aa).

A run of 2 helical transmembrane segments spans residues tryptophan 4–alanine 24 and glycine 29–glycine 49.

This sequence belongs to the UPF0391 family.

It is found in the cell membrane. The chain is UPF0391 membrane protein PputGB1_0151 from Pseudomonas putida (strain GB-1).